We begin with the raw amino-acid sequence, 352 residues long: Ion-translocating oxidoreductase complex subunit D (352 aa).

4 consecutive transmembrane segments (helical) span residues 20–40, 42–62, 89–109, and 123–143; these read IMLL…CFFG, GTLV…ALVL, IPPL…VIIA, and PAMI…TSWL. FMN phosphoryl threonine is present on T187. Transmembrane regions (helical) follow at residues 215 to 235, 242 to 262, 267 to 287, 301 to 321, and 322 to 342; these read LAGA…VWLL, WHIP…GWLF, LAAP…FFIL, LIFG…GGYP, and DGVA…DYYT.

Belongs to the NqrB/RnfD family. In terms of assembly, the complex is composed of six subunits: RsxA, RsxB, RsxC, RsxD, RsxE and RsxG. FMN is required as a cofactor.

It is found in the cell inner membrane. In terms of biological role, part of a membrane-bound complex that couples electron transfer with translocation of ions across the membrane. Required to maintain the reduced state of SoxR. This Escherichia coli O7:K1 (strain IAI39 / ExPEC) protein is Ion-translocating oxidoreductase complex subunit D.